The sequence spans 103 residues: Large ribosomal subunit protein bL21 (103 aa).

The protein belongs to the bacterial ribosomal protein bL21 family. As to quaternary structure, part of the 50S ribosomal subunit. Contacts protein L20.

Functionally, this protein binds to 23S rRNA in the presence of protein L20. This chain is Large ribosomal subunit protein bL21, found in Cupriavidus pinatubonensis (strain JMP 134 / LMG 1197) (Cupriavidus necator (strain JMP 134)).